The primary structure comprises 413 residues: Cardiolipin synthase B (413 aa).

PLD phosphodiesterase domains lie at Val-108–His-135 and Arg-285–Ser-312. Residues His-113, Lys-115, Asp-120, His-290, Lys-292, and Asp-297 contribute to the active site. The tract at residues Val-390–Pro-413 is disordered.

It belongs to the phospholipase D family. Cardiolipin synthase subfamily. ClsB sub-subfamily.

It is found in the cell membrane. The enzyme catalyses 2 a 1,2-diacyl-sn-glycero-3-phospho-(1'-sn-glycerol) = a cardiolipin + glycerol. In terms of biological role, catalyzes the phosphatidyl group transfer from one phosphatidylglycerol molecule to another to form cardiolipin (CL) (diphosphatidylglycerol) and glycerol. This Escherichia coli O157:H7 protein is Cardiolipin synthase B.